Reading from the N-terminus, the 147-residue chain is Nucleoside diphosphate kinase (147 aa).

Positions 9, 57, 85, 91, 102, and 112 each coordinate ATP. H115 (pros-phosphohistidine intermediate) is an active-site residue.

This sequence belongs to the NDK family. Homotetramer. The cofactor is Mg(2+).

The protein localises to the cytoplasm. It carries out the reaction a 2'-deoxyribonucleoside 5'-diphosphate + ATP = a 2'-deoxyribonucleoside 5'-triphosphate + ADP. It catalyses the reaction a ribonucleoside 5'-diphosphate + ATP = a ribonucleoside 5'-triphosphate + ADP. In terms of biological role, major role in the synthesis of nucleoside triphosphates other than ATP. The ATP gamma phosphate is transferred to the NDP beta phosphate via a ping-pong mechanism, using a phosphorylated active-site intermediate. The sequence is that of Nucleoside diphosphate kinase from Listeria monocytogenes serotype 4a (strain HCC23).